A 620-amino-acid chain; its full sequence is Probable potassium transport system protein Kup (620 aa).

The next 12 helical transmembrane spans lie at 8–28 (VGLL…SPLY), 50–70 (VLSL…VILI), 102–122 (MLLG…TPAI), 136–156 (PDLK…LFAI), 168–188 (FGPV…ANIV), 211–231 (LMSF…EALY), 246–266 (WFSL…ALLI), 284–304 (MVMP…QAVI), 336–356 (IYVP…VIGF), 368–388 (IAVT…MALL), 393–413 (MALV…YFAA), and 415–435 (IIKV…SFTV).

Belongs to the HAK/KUP transporter (TC 2.A.72) family.

Its subcellular location is the cell inner membrane. It catalyses the reaction K(+)(in) + H(+)(in) = K(+)(out) + H(+)(out). Its function is as follows. Transport of potassium into the cell. Likely operates as a K(+):H(+) symporter. The sequence is that of Probable potassium transport system protein Kup from Rhodopseudomonas palustris (strain HaA2).